The primary structure comprises 274 residues: Sulfur carrier protein FdhD (274 aa).

The Cysteine persulfide intermediate role is filled by Cys-121. 258–263 (FSKPGR) serves as a coordination point for Mo-bis(molybdopterin guanine dinucleotide).

This sequence belongs to the FdhD family.

It is found in the cytoplasm. Functionally, required for formate dehydrogenase (FDH) activity. Acts as a sulfur carrier protein that transfers sulfur from IscS to the molybdenum cofactor prior to its insertion into FDH. This chain is Sulfur carrier protein FdhD, found in Yersinia pseudotuberculosis serotype IB (strain PB1/+).